The following is a 466-amino-acid chain: Ribulose bisphosphate carboxylase large chain (466 aa).

At Lys-4 the chain carries N6,N6,N6-trimethyllysine. Positions 113 and 163 each coordinate substrate. Lys-165 (proton acceptor) is an active-site residue. Lys-167 contacts substrate. Mg(2+)-binding residues include Lys-191, Asp-193, and Glu-194. N6-carboxylysine is present on Lys-191. The active-site Proton acceptor is His-284. 3 residues coordinate substrate: Arg-285, His-317, and Ser-369.

The protein belongs to the RuBisCO large chain family. Type I subfamily. As to quaternary structure, heterohexadecamer of 8 large chains and 8 small chains; disulfide-linked. The disulfide link is formed within the large subunit homodimers. Mg(2+) is required as a cofactor. Post-translationally, the disulfide bond which can form in the large chain dimeric partners within the hexadecamer appears to be associated with oxidative stress and protein turnover.

The protein localises to the plastid. It is found in the chloroplast. The enzyme catalyses 2 (2R)-3-phosphoglycerate + 2 H(+) = D-ribulose 1,5-bisphosphate + CO2 + H2O. It catalyses the reaction D-ribulose 1,5-bisphosphate + O2 = 2-phosphoglycolate + (2R)-3-phosphoglycerate + 2 H(+). In terms of biological role, ruBisCO catalyzes two reactions: the carboxylation of D-ribulose 1,5-bisphosphate, the primary event in carbon dioxide fixation, as well as the oxidative fragmentation of the pentose substrate in the photorespiration process. Both reactions occur simultaneously and in competition at the same active site. The chain is Ribulose bisphosphate carboxylase large chain from Barleria prionitis (Porcupine flower).